We begin with the raw amino-acid sequence, 660 residues long: Phosphatidylinositol-3-phosphate phosphatase MTMR7 (660 aa).

In terms of domain architecture, Myotubularin phosphatase spans 126–504; that stretch reads GWLLVDLSEE…FTYKFWNGMY (379 aa). A 1,2-diacyl-sn-glycero-3-phospho-(1D-myo-inositol-3-phosphate)-binding residues include asparagine 250, asparagine 275, and isoleucine 276. Cysteine 338 acts as the Phosphocysteine intermediate in catalysis. A 1,2-diacyl-sn-glycero-3-phospho-(1D-myo-inositol-3-phosphate) contacts are provided by serine 339, aspartate 340, glycine 341, tryptophan 342, aspartate 343, arginine 344, and arginine 384. The stretch at 514–548 forms a coiled coil; sequence RQSVTDYLMAVKEESQQLEEELESLEERLEKIQKV. The tract at residues 550 to 660 is disordered; sequence LHGTKVKSKQ…DSDEAVFLTA (111 aa). Over residues 566-596 the composition is skewed to polar residues; the sequence is SGFSTSDHSTANTPQDYSGNSKSFPSRSPSQ. At threonine 578 the chain carries Phosphothreonine. The segment covering 641–653 has biased composition (basic and acidic residues); the sequence is APSEDSGKDRDSD.

Belongs to the protein-tyrosine phosphatase family. Non-receptor class myotubularin subfamily. Heterodimer (via C-terminus) with MTMR9 (via coiled coil domain); the interaction enhances MTMR7 catalytic activity. Does not homodimerize. Interacts with RAB1B (in GDP-bound form). In terms of tissue distribution, highly expressed in brain (at protein level). Expressed at low levels in liver, kidney and testis.

Its subcellular location is the cytoplasm. It is found in the endomembrane system. It carries out the reaction a 1,2-diacyl-sn-glycero-3-phospho-(1D-myo-inositol-3-phosphate) + H2O = a 1,2-diacyl-sn-glycero-3-phospho-(1D-myo-inositol) + phosphate. It catalyses the reaction 1D-myo-inositol 1,3-bisphosphate + H2O = 1D-myo-inositol 1-phosphate + phosphate. Its activity is regulated as follows. Interaction with MTMR9 increases phosphatase activity. Its function is as follows. Lipid phosphatase that specifically dephosphorylates the D-3 position of phosphatidylinositol 3-phosphate (PtdIns(3)P) and inositol 1,3-bisphosphate (Ins(1,3)P2). This Mus musculus (Mouse) protein is Phosphatidylinositol-3-phosphate phosphatase MTMR7.